The sequence spans 532 residues: Invertase 2 (532 aa).

The first 19 residues, Met-1–Ala-19, serve as a signal peptide directing secretion. A glycan (N-linked (GlcNAc...) asparagine) is linked at Asn-23. Substrate-binding positions include Trp-39–Asp-42 and Gln-60. Asp-42 is an active-site residue. Asn-64 carries an N-linked (GlcNAc...) asparagine; partial glycan. The N-linked (GlcNAc...) asparagine glycan is linked to Asn-97. A substrate-binding site is contributed by Phe-102–Ser-103. 2 N-linked (GlcNAc...) asparagine glycosylation sites follow: Asn-111 and Asn-118. An N-linked (GlcNAc...) asparagine; partial glycan is attached at Asn-165. Substrate is bound by residues Arg-170 to Asp-171 and Glu-223. Asn-266 and Asn-275 each carry an N-linked (GlcNAc...) asparagine; partial glycan. Trp-311 contributes to the substrate binding site. Asn-356, Asn-369, Asn-384, and Asn-398 each carry an N-linked (GlcNAc...) asparagine glycan. A glycan (N-linked (GlcNAc...) asparagine; partial) is linked at Asn-512.

It belongs to the glycosyl hydrolase 32 family. In terms of processing, isoform Secreted is glycosylated. Isoform Intracellular is not glycosylated.

The protein localises to the cytoplasm. It localises to the secreted. The enzyme catalyses Hydrolysis of terminal non-reducing beta-D-fructofuranoside residues in beta-D-fructofuranosides.. The chain is Invertase 2 (SUC2) from Saccharomyces cerevisiae (strain ATCC 204508 / S288c) (Baker's yeast).